A 193-amino-acid chain; its full sequence is TDSPIPAPAPAAKPKRARAPRKPASHPTYSEMIAAAIRADKSRGGSSRQSIQKYVKSHYKVGQHADLQIKLAIRRLLTTGVLKQTKGVGASGSFRLAKGDKAKRSPAGRKKKKKAARKSTSPKKAARPRKARSPAKKPKAAARKARKKSRASPKKAKKPKTVKAKSLKTSKPKKARRSKPRAKSGARKSPKKK.

Residues 1 to 11 (TDSPIPAPAPA) are compositionally biased toward pro residues. Disordered regions lie at residues 1 to 29 (TDSPIPAPAPAAKPKRARAPRKPASHPTY) and 80 to 193 (GVLK…PKKK). Residues 13–24 (KPKRARAPRKPA) are compositionally biased toward basic residues. Residues 25-98 (SHPTYSEMIA…GASGSFRLAK (74 aa)) enclose the H15 domain. The segment covering 104–193 (RSPAGRKKKK…SGARKSPKKK (90 aa)) has biased composition (basic residues).

It belongs to the histone H1/H5 family. Erythroid cells.

It is found in the nucleus. The protein resides in the chromosome. In terms of biological role, histone H5 performs the same function as H1, being necessary for the condensation of nucleosome chains into higher order structures, and replaces histone H1 in certain cells. This is Histone H5 from Anser anser anser (Western greylag goose).